We begin with the raw amino-acid sequence, 283 residues long: Putative 4-diphosphocytidyl-2-C-methyl-D-erythritol kinase (283 aa).

K10 is a catalytic residue. Residue 94–104 (PVCAGLGGGST) participates in ATP binding. Residue D136 is part of the active site.

The protein belongs to the GHMP kinase family. IspE subfamily.

It carries out the reaction 4-CDP-2-C-methyl-D-erythritol + ATP = 4-CDP-2-C-methyl-D-erythritol 2-phosphate + ADP + H(+). Catalyzes the phosphorylation of the position 2 hydroxy group of 4-diphosphocytidyl-2C-methyl-D-erythritol. The chain is Putative 4-diphosphocytidyl-2-C-methyl-D-erythritol kinase from Streptococcus agalactiae serotype III (strain NEM316).